A 268-amino-acid chain; its full sequence is Purine nucleoside phosphorylase (268 aa).

Phosphate contacts are provided by residues Ser36, His68, 88–90 (RIH), and Ala120. Glu189 is a binding site for a purine D-ribonucleoside. Ser208 is a binding site for phosphate. Asn231 serves as a coordination point for a purine D-ribonucleoside.

This sequence belongs to the PNP/MTAP phosphorylase family. As to quaternary structure, homotrimer.

The enzyme catalyses a purine 2'-deoxy-D-ribonucleoside + phosphate = a purine nucleobase + 2-deoxy-alpha-D-ribose 1-phosphate. The protein operates within purine metabolism; purine nucleoside salvage. Functionally, the purine nucleoside phosphorylases catalyze the phosphorolytic breakdown of the N-glycosidic bond in the beta-(deoxy)ribonucleoside molecules, with the formation of the corresponding free purine bases and pentose-1-phosphate. Cleaves guanosine, inosine, 2'-deoxyguanosine and 2'-deoxyinosine. In Mycobacterium leprae (strain TN), this protein is Purine nucleoside phosphorylase (punA).